The primary structure comprises 368 residues: Probable magnesium transporter (368 aa).

The Extracellular segment spans residues 1–4 (MEDK). The chain crosses the membrane as a helical span at residues 5-25 (YIGLALAMSSSLAIGTSFIIT). Topologically, residues 26-50 (KKGLMDASARTGGTDGVQASDYLQN) are cytoplasmic. A helical membrane pass occupies residues 51 to 71 (PIWWGGMITMAIGEIANFAAY). Residues 72 to 76 (TFAPA) are Extracellular-facing. The chain crosses the membrane as a helical span at residues 77-97 (ILVTPLGALSVIIGAVLAAIF). Residues 98–101 (LKER) are Cytoplasmic-facing. A helical membrane pass occupies residues 102–122 (LGTLGKMGCAICLMGSVIIIL). Residues 123-143 (HAPPDKEVQTVDEILGYATQP) lie on the Extracellular side of the membrane. The chain crosses the membrane as a helical span at residues 144–164 (GFMFYCTVVTLYSLFMIYKIV). The Cytoplasmic segment spans residues 165–175 (PKYGNTNPMIY). Residues 176 to 196 (LSICSSVGSISVMSIKAFGIA) form a helical membrane-spanning segment. Residues 197-206 (LKLTLGGNNQ) are Extracellular-facing. A helical transmembrane segment spans residues 207 to 227 (FTHVSTYLFLIVVALCIVTQM). The Cytoplasmic portion of the chain corresponds to 228 to 240 (NYFNKALDQFDTS). A helical membrane pass occupies residues 241-261 (IVNPLYYVTFTTFTLAASFIL). Residues 262–269 (FKGFNTSS) lie on the Extracellular side of the membrane. Residue Asn266 is glycosylated (N-linked (GlcNAc...) asparagine). The helical transmembrane segment at 270 to 290 (AVDIISLLIGFLIIFSGVYLL) threads the bilayer. The Cytoplasmic portion of the chain corresponds to 291–368 (NISRSESPMV…GDEDTRNYRH (78 aa)).

The protein belongs to the NIPA family.

It is found in the cell membrane. It localises to the early endosome. It catalyses the reaction Mg(2+)(in) = Mg(2+)(out). Probably acts as a selective Mg(2+) transporter. Plays a role in cell wall integrity and in engulfment by host macrophages. This Candida albicans (strain SC5314 / ATCC MYA-2876) (Yeast) protein is Probable magnesium transporter.